A 520-amino-acid chain; its full sequence is Cytochrome P450 72A397 (520 aa).

A helical transmembrane segment spans residues 14–34 (AVAVAVVVVGWAWKVLNWVWV). C468 lines the heme pocket.

Belongs to the cytochrome P450 family. Requires heme as cofactor.

The protein localises to the membrane. It catalyses the reaction oleanolate + reduced [NADPH--hemoprotein reductase] + O2 = hederagenin + oxidized [NADPH--hemoprotein reductase] + H2O + H(+). Its function is as follows. Catalyzes the oxidation of oleanolate at the C-23 position to form hederagenin. This chain is Cytochrome P450 72A397, found in Kalopanax septemlobus (Castor aralia).